The primary structure comprises 255 residues: 14-3-3 protein 5 (255 aa).

It belongs to the 14-3-3 family. As to quaternary structure, homodimer.

The protein is 14-3-3 protein 5 (TFT5) of Solanum lycopersicum (Tomato).